Reading from the N-terminus, the 347-residue chain is MDNCILEIKNLSHYYDNNGNKTLDNINLKIKKNEFITLLGPSGCGKTTLIKILGGFLSQKNGEIYFLSKEISKTNPNKREINTVFQNYALFPHMNVFDNISFGLRMKKTPKDTIKEKVKTSLSLIGMPKYAYRNINELSGGQKQRVAIARAMVMEPKLLLLDEPLSALDLKMRQEMQKELKKIQRQLGITFIYVTHDQEEALTMSDRIVVMNEGIILQVGTPEEIYNEPKTKFVADFIGESNIFDGTYKKELVVSLLGHEFECLDKGFEAEEAVDLVIRPEDIKLLPKGKGHLSGTITSAIFQGVHYEMTLEIQKTNWIVQSTRLTKVGEEVDIFLEPDDIHVMHKE.

The region spanning 6–238 (LEIKNLSHYY…PKTKFVADFI (233 aa)) is the ABC transporter domain. Position 40 to 47 (40 to 47 (GPSGCGKT)) interacts with ATP.

Belongs to the ABC transporter superfamily. Spermidine/putrescine importer (TC 3.A.1.11.1) family. In terms of assembly, the complex is composed of two ATP-binding proteins (PotA), two transmembrane proteins (PotB and PotC) and a solute-binding protein (PotD).

The protein resides in the cell inner membrane. The enzyme catalyses ATP + H2O + polyamine-[polyamine-binding protein]Side 1 = ADP + phosphate + polyamineSide 2 + [polyamine-binding protein]Side 1.. In terms of biological role, part of the ABC transporter complex PotABCD involved in spermidine/putrescine import. Responsible for energy coupling to the transport system. This is Spermidine/putrescine import ATP-binding protein PotA from Borreliella afzelii (strain PKo) (Borrelia afzelii).